The primary structure comprises 1167 residues: DNA-directed RNA polymerase subunit beta (1167 aa).

Positions 1-27 (MAVSPANQATAATTSAESRSEATGIPG) are disordered. Over residues 9–23 (ATAATTSAESRSEAT) the composition is skewed to low complexity.

The protein belongs to the RNA polymerase beta chain family. The RNAP catalytic core consists of 2 alpha, 1 beta, 1 beta' and 1 omega subunit. When a sigma factor is associated with the core the holoenzyme is formed, which can initiate transcription.

The enzyme catalyses RNA(n) + a ribonucleoside 5'-triphosphate = RNA(n+1) + diphosphate. Its function is as follows. DNA-dependent RNA polymerase catalyzes the transcription of DNA into RNA using the four ribonucleoside triphosphates as substrates. This Amycolatopsis mediterranei (strain S699) (Nocardia mediterranei) protein is DNA-directed RNA polymerase subunit beta.